A 164-amino-acid chain; its full sequence is CB1 cannabinoid receptor-interacting protein 1 (164 aa).

This sequence belongs to the CNRIP family. Interacts with the cannabinoid receptor CNR1 (via C-terminus). Does not interact with cannabinoid receptor CNR2. Highly expressed in brain. Also detected in heart, lung, intestine, kidney, testis, spleen, liver and muscle (at protein level).

In terms of biological role, suppresses cannabinoid receptor CNR1-mediated tonic inhibition of voltage-gated calcium channels. This is CB1 cannabinoid receptor-interacting protein 1 (Cnrip1) from Mus musculus (Mouse).